The chain runs to 210 residues: Large ribosomal subunit protein uL3 (210 aa).

The protein belongs to the universal ribosomal protein uL3 family. As to quaternary structure, part of the 50S ribosomal subunit. Forms a cluster with proteins L14 and L19.

Functionally, one of the primary rRNA binding proteins, it binds directly near the 3'-end of the 23S rRNA, where it nucleates assembly of the 50S subunit. In Geobacter sulfurreducens (strain ATCC 51573 / DSM 12127 / PCA), this protein is Large ribosomal subunit protein uL3.